Here is a 121-residue protein sequence, read N- to C-terminus: Small ribosomal subunit protein bS6 (121 aa).

It belongs to the bacterial ribosomal protein bS6 family.

Its function is as follows. Binds together with bS18 to 16S ribosomal RNA. The chain is Small ribosomal subunit protein bS6 from Rickettsia conorii (strain ATCC VR-613 / Malish 7).